Reading from the N-terminus, the 317-residue chain is Ribosomal RNA small subunit methyltransferase H (317 aa).

S-adenosyl-L-methionine is bound by residues 30-32 (GGH), Asp-50, Tyr-78, Asp-95, and Gln-102.

It belongs to the methyltransferase superfamily. RsmH family.

Its subcellular location is the cytoplasm. The catalysed reaction is cytidine(1402) in 16S rRNA + S-adenosyl-L-methionine = N(4)-methylcytidine(1402) in 16S rRNA + S-adenosyl-L-homocysteine + H(+). Specifically methylates the N4 position of cytidine in position 1402 (C1402) of 16S rRNA. The sequence is that of Ribosomal RNA small subunit methyltransferase H from Nitrosomonas eutropha (strain DSM 101675 / C91 / Nm57).